Reading from the N-terminus, the 2492-residue chain is Talin-A (2492 aa).

The FERM domain maps to 84-365 (RPQKFKLLDG…GYIEIIMKAR (282 aa)). The region spanning 2250–2492 (EEDNVLEDLE…NSRKQNYNKN (243 aa)) is the I/LWEQ domain.

It localises to the cytoplasm. The protein resides in the cytoskeleton. Its subcellular location is the cell cortex. Functionally, actin-binding protein that may be involved in the control of cell motility and chemotaxis. The chain is Talin-A (talA) from Dictyostelium discoideum (Social amoeba).